A 78-amino-acid polypeptide reads, in one-letter code: Translation initiation factor IF-1, chloroplastic (78 aa).

The S1-like domain occupies 1–72 (MEKQNLIDME…TKGRITYRLR (72 aa)).

This sequence belongs to the IF-1 family. As to quaternary structure, component of the 30S ribosomal translation pre-initiation complex which assembles on the 30S ribosome in the order IF-2 and IF-3, IF-1 and N-formylmethionyl-tRNA(fMet); mRNA recruitment can occur at any time during PIC assembly.

Its subcellular location is the plastid. It is found in the chloroplast. In terms of biological role, one of the essential components for the initiation of protein synthesis. Stabilizes the binding of IF-2 and IF-3 on the 30S subunit to which N-formylmethionyl-tRNA(fMet) subsequently binds. Helps modulate mRNA selection, yielding the 30S pre-initiation complex (PIC). Upon addition of the 50S ribosomal subunit IF-1, IF-2 and IF-3 are released leaving the mature 70S translation initiation complex. This is Translation initiation factor IF-1, chloroplastic from Anthoceros angustus (Hornwort).